Consider the following 412-residue polypeptide: Alpha-1-antiproteinase (412 aa).

The N-terminal stretch at 1 to 24 is a signal peptide; the sequence is MTPSISWGLLLLAGLFCLVPSFLA. Ser33 bears the Phosphoserine mark. N-linked (GlcNAc...) asparagine glycosylation is found at Asn100, Asn133, Asn264, and Asn313. Residues 367–386 are RCL; sequence AATVLQAVPMSMPPILNFNK. Position 377 is a phosphoserine (Ser377).

This sequence belongs to the serpin family. In terms of assembly, interacts with CELA2A. Interacts with ERGIC3 and LMAN1/ERGIC53. Interacts with PRSS1/Trypsin. In terms of tissue distribution, expressed not only in liver but also in kidney tubule cells, where it is regulated by androgens during development.

It is found in the secreted. Its function is as follows. Inhibitor of serine proteases. Its primary target is elastase, but it also has a moderate affinity for plasmin and thrombin. This is Alpha-1-antiproteinase (Serpina1) from Mus caroli (Ryukyu mouse).